Reading from the N-terminus, the 256-residue chain is Proteasome subunit alpha (256 aa).

Positions Leu-226–Ser-256 are disordered. Basic and acidic residues predominate over residues Gly-245 to Ser-256.

Belongs to the peptidase T1A family. The 20S proteasome core is composed of 14 alpha and 14 beta subunits that assemble into four stacked heptameric rings, resulting in a barrel-shaped structure. The two inner rings, each composed of seven catalytic beta subunits, are sandwiched by two outer rings, each composed of seven alpha subunits. The catalytic chamber with the active sites is on the inside of the barrel. Has a gated structure, the ends of the cylinder being occluded by the N-termini of the alpha-subunits. Is capped by the proteasome-associated ATPase, ARC.

It is found in the cytoplasm. Its pathway is protein degradation; proteasomal Pup-dependent pathway. Its activity is regulated as follows. The formation of the proteasomal ATPase ARC-20S proteasome complex, likely via the docking of the C-termini of ARC into the intersubunit pockets in the alpha-rings, may trigger opening of the gate for substrate entry. Interconversion between the open-gate and close-gate conformations leads to a dynamic regulation of the 20S proteasome proteolysis activity. Functionally, component of the proteasome core, a large protease complex with broad specificity involved in protein degradation. The protein is Proteasome subunit alpha of Saccharopolyspora erythraea (strain ATCC 11635 / DSM 40517 / JCM 4748 / NBRC 13426 / NCIMB 8594 / NRRL 2338).